The chain runs to 951 residues: Valine--tRNA ligase (951 aa).

A 'HIGH' region motif is present at residues 42–52 (PNVTGSLHMGH). Residues 554–558 (KMSKS) carry the 'KMSKS' region motif. Residue Lys557 coordinates ATP. Positions 880–914 (AGLIDKAAELDRLAKEVAKLEAEIGRIESKLSNEG) form a coiled coil.

Belongs to the class-I aminoacyl-tRNA synthetase family. ValS type 1 subfamily. As to quaternary structure, monomer.

It is found in the cytoplasm. It carries out the reaction tRNA(Val) + L-valine + ATP = L-valyl-tRNA(Val) + AMP + diphosphate. In terms of biological role, catalyzes the attachment of valine to tRNA(Val). As ValRS can inadvertently accommodate and process structurally similar amino acids such as threonine, to avoid such errors, it has a 'posttransfer' editing activity that hydrolyzes mischarged Thr-tRNA(Val) in a tRNA-dependent manner. The chain is Valine--tRNA ligase from Pectobacterium atrosepticum (strain SCRI 1043 / ATCC BAA-672) (Erwinia carotovora subsp. atroseptica).